The chain runs to 500 residues: Glycerol kinase (500 aa).

T13 provides a ligand contact to ADP. ATP is bound by residues T13, T14, and S15. Residue T13 coordinates sn-glycerol 3-phosphate. Residue R17 participates in ADP binding. 3 residues coordinate sn-glycerol 3-phosphate: R83, E84, and Y135. Residues R83, E84, and Y135 each coordinate glycerol. Phosphohistidine; by HPr is present on H231. D245 is a binding site for sn-glycerol 3-phosphate. 2 residues coordinate glycerol: D245 and Q246. ADP is bound by residues T267 and G310. ATP-binding residues include T267, G310, Q314, and G411. The ADP site is built by G411 and N415.

The protein belongs to the FGGY kinase family. Homotetramer and homodimer (in equilibrium). Post-translationally, the phosphoenolpyruvate-dependent sugar phosphotransferase system (PTS), including enzyme I, and histidine-containing protein (HPr) are required for the phosphorylation, which leads to the activation of the enzyme.

The enzyme catalyses glycerol + ATP = sn-glycerol 3-phosphate + ADP + H(+). It participates in polyol metabolism; glycerol degradation via glycerol kinase pathway; sn-glycerol 3-phosphate from glycerol: step 1/1. Activated by phosphorylation and inhibited by fructose 1,6-bisphosphate (FBP). In terms of biological role, key enzyme in the regulation of glycerol uptake and metabolism. Catalyzes the phosphorylation of glycerol to yield sn-glycerol 3-phosphate. This chain is Glycerol kinase, found in Oceanobacillus iheyensis (strain DSM 14371 / CIP 107618 / JCM 11309 / KCTC 3954 / HTE831).